A 563-amino-acid chain; its full sequence is CDKN2A-interacting protein (563 aa).

N-acetylalanine is present on Ala2. The 108-residue stretch at 19 to 126 (VETLRCEGET…KVKKRGISSS (108 aa)) folds into the XRN2-binding (XTBD) domain. Disordered stretches follow at residues 122–289 (GISS…LLGS) and 304–351 (SSSE…PSLL). Ser124 is subject to Phosphoserine. Positions 147–160 (VERDHGKKSAKTDR) are enriched in basic and acidic residues. 2 stretches are compositionally biased toward low complexity: residues 168-216 (SSPS…SSQV) and 234-248 (SASF…SMNS). A Glycyl lysine isopeptide (Lys-Gly) (interchain with G-Cter in SUMO1) cross-link involves residue Lys177. At Ser234 the chain carries Phosphoserine. The segment covering 249-262 (HMTQSTDNRQQSGS) has biased composition (polar residues). Residues 270 to 280 (GSSGSASQSSS) show a composition bias toward low complexity. Thr340 is subject to Phosphothreonine. Ser371 is subject to Phosphoserine. Residues 445–520 (NHGELLNAAI…SREALKLFLK (76 aa)) form the DRBM domain.

The protein belongs to the CARF family. Interacts with CDKN2A/p14ARF, p53/TP53 and MDM2. Interacts with CHEK2 and MAPK3. Interacts with XRN2. In terms of processing, may be ubiquitinated.

The protein resides in the nucleus. The protein localises to the nucleoplasm. Its function is as follows. Regulates DNA damage response and cell proliferation in a dose-dependent manner through a number of signaling pathways involved in cell proliferation, apoptosis and senescence. The protein is CDKN2A-interacting protein (Cdkn2aip) of Mus musculus (Mouse).